Reading from the N-terminus, the 126-residue chain is Aspartate 1-decarboxylase (126 aa).

Serine 25 functions as the Schiff-base intermediate with substrate; via pyruvic acid in the catalytic mechanism. Serine 25 bears the Pyruvic acid (Ser) mark. Threonine 57 contributes to the substrate binding site. The active-site Proton donor is tyrosine 58. 73 to 75 serves as a coordination point for substrate; the sequence is GAA.

This sequence belongs to the PanD family. As to quaternary structure, heterooctamer of four alpha and four beta subunits. It depends on pyruvate as a cofactor. Is synthesized initially as an inactive proenzyme, which is activated by self-cleavage at a specific serine bond to produce a beta-subunit with a hydroxyl group at its C-terminus and an alpha-subunit with a pyruvoyl group at its N-terminus.

Its subcellular location is the cytoplasm. The enzyme catalyses L-aspartate + H(+) = beta-alanine + CO2. It participates in cofactor biosynthesis; (R)-pantothenate biosynthesis; beta-alanine from L-aspartate: step 1/1. In terms of biological role, catalyzes the pyruvoyl-dependent decarboxylation of aspartate to produce beta-alanine. In Azotobacter vinelandii (strain DJ / ATCC BAA-1303), this protein is Aspartate 1-decarboxylase.